Here is a 143-residue protein sequence, read N- to C-terminus: SsrA-binding protein (143 aa).

Belongs to the SmpB family.

It is found in the cytoplasm. Its function is as follows. Required for rescue of stalled ribosomes mediated by trans-translation. Binds to transfer-messenger RNA (tmRNA), required for stable association of tmRNA with ribosomes. tmRNA and SmpB together mimic tRNA shape, replacing the anticodon stem-loop with SmpB. tmRNA is encoded by the ssrA gene; the 2 termini fold to resemble tRNA(Ala) and it encodes a 'tag peptide', a short internal open reading frame. During trans-translation Ala-aminoacylated tmRNA acts like a tRNA, entering the A-site of stalled ribosomes, displacing the stalled mRNA. The ribosome then switches to translate the ORF on the tmRNA; the nascent peptide is terminated with the 'tag peptide' encoded by the tmRNA and targeted for degradation. The ribosome is freed to recommence translation, which seems to be the essential function of trans-translation. The protein is SsrA-binding protein of Deinococcus radiodurans (strain ATCC 13939 / DSM 20539 / JCM 16871 / CCUG 27074 / LMG 4051 / NBRC 15346 / NCIMB 9279 / VKM B-1422 / R1).